The following is a 231-amino-acid chain: ATP synthase subunit a (231 aa).

A run of 5 helical transmembrane segments spans residues 14 to 34 (GFLK…VLAV), 78 to 98 (YLGF…CTVI), 107 to 127 (SLST…FFGI), 174 to 194 (MIIG…MTAL), and 196 to 216 (LLTG…YIAA).

The protein belongs to the ATPase A chain family. In terms of assembly, F-type ATPases have 2 components, CF(1) - the catalytic core - and CF(0) - the membrane proton channel. CF(1) has five subunits: alpha(3), beta(3), gamma(1), delta(1), epsilon(1). CF(0) has three main subunits: a(1), b(2) and c(9-12). The alpha and beta chains form an alternating ring which encloses part of the gamma chain. CF(1) is attached to CF(0) by a central stalk formed by the gamma and epsilon chains, while a peripheral stalk is formed by the delta and b chains.

The protein resides in the cell inner membrane. Functionally, key component of the proton channel; it plays a direct role in the translocation of protons across the membrane. The sequence is that of ATP synthase subunit a from Albidiferax ferrireducens (strain ATCC BAA-621 / DSM 15236 / T118) (Rhodoferax ferrireducens).